The chain runs to 341 residues: Anthranilate phosphoribosyltransferase (341 aa).

5-phospho-alpha-D-ribose 1-diphosphate contacts are provided by residues glycine 79, 82-83 (GD), threonine 87, 89-92 (NIST), 107-115 (KHGNRAVSS), and serine 119. Glycine 79 lines the anthranilate pocket. Position 91 (serine 91) interacts with Mg(2+). Asparagine 110 contributes to the anthranilate binding site. Anthranilate is bound at residue arginine 165. Mg(2+) contacts are provided by aspartate 224 and glutamate 225.

Belongs to the anthranilate phosphoribosyltransferase family. As to quaternary structure, homodimer. It depends on Mg(2+) as a cofactor.

The catalysed reaction is N-(5-phospho-beta-D-ribosyl)anthranilate + diphosphate = 5-phospho-alpha-D-ribose 1-diphosphate + anthranilate. It participates in amino-acid biosynthesis; L-tryptophan biosynthesis; L-tryptophan from chorismate: step 2/5. In terms of biological role, catalyzes the transfer of the phosphoribosyl group of 5-phosphorylribose-1-pyrophosphate (PRPP) to anthranilate to yield N-(5'-phosphoribosyl)-anthranilate (PRA). The sequence is that of Anthranilate phosphoribosyltransferase from Bacillus cereus (strain ZK / E33L).